Consider the following 126-residue polypeptide: DNA-directed RNA polymerase 35 kDa subunit (126 aa).

It belongs to the poxviridae DNA-directed RNA polymerase 35 kDa subunit family. The DNA-dependent RNA polymerase used for intermediate and late genes expression consists of eight subunits 147 kDa, 133 kDa, 35 kDa, 30 kDa, 22 kDa, 19 kDa, 18 kDa and 7 kDa totalling more than 500 kDa in mass. The same holoenzyme, with the addition of the transcription-specificity factor RAP94, is used for early gene expression.

It is found in the virion. The catalysed reaction is RNA(n) + a ribonucleoside 5'-triphosphate = RNA(n+1) + diphosphate. Its function is as follows. Part of the DNA-dependent RNA polymerase which catalyzes the transcription of viral DNA into RNA using the four ribonucleoside triphosphates as substrates. Responsible for the transcription of early, intermediate and late genes. DNA-dependent RNA polymerase associates with the early transcription factor (ETF) thereby allowing the early genes transcription. Late transcription, and probably also intermediate transcription, require newly synthesized RNA polymerase. In Ovis aries (Sheep), this protein is DNA-directed RNA polymerase 35 kDa subunit (RPO35).